The primary structure comprises 483 residues: Isocitrate dehydrogenase [NADP] (483 aa).

An NADP(+)-binding site is contributed by Thr74. Residues Ser83, Asn85, Arg89, Arg99, and Arg121 each coordinate D-threo-isocitrate. Asp232 lines the Mg(2+) pocket. Residues 264–270 (HGSAPDI) and Asn277 each bind NADP(+).

The protein belongs to the isocitrate and isopropylmalate dehydrogenases family. As to quaternary structure, homodimer. Mg(2+) serves as cofactor. Requires Mn(2+) as cofactor.

The catalysed reaction is D-threo-isocitrate + NADP(+) = 2-oxoglutarate + CO2 + NADPH. In terms of biological role, catalyzes the oxidative decarboxylation of isocitrate to 2-oxoglutarate and carbon dioxide with the concomitant reduction of NADP(+). This Rickettsia bellii (strain RML369-C) protein is Isocitrate dehydrogenase [NADP] (icd).